Consider the following 240-residue polypeptide: Biosynthetic peptidoglycan transglycosylase (240 aa).

Residues 12–31 (ALMWFMVGSVLLVLLLRFVP) form a helical membrane-spanning segment.

The protein belongs to the glycosyltransferase 51 family.

It is found in the cell inner membrane. The catalysed reaction is [GlcNAc-(1-&gt;4)-Mur2Ac(oyl-L-Ala-gamma-D-Glu-L-Lys-D-Ala-D-Ala)](n)-di-trans,octa-cis-undecaprenyl diphosphate + beta-D-GlcNAc-(1-&gt;4)-Mur2Ac(oyl-L-Ala-gamma-D-Glu-L-Lys-D-Ala-D-Ala)-di-trans,octa-cis-undecaprenyl diphosphate = [GlcNAc-(1-&gt;4)-Mur2Ac(oyl-L-Ala-gamma-D-Glu-L-Lys-D-Ala-D-Ala)](n+1)-di-trans,octa-cis-undecaprenyl diphosphate + di-trans,octa-cis-undecaprenyl diphosphate + H(+). It participates in cell wall biogenesis; peptidoglycan biosynthesis. Functionally, peptidoglycan polymerase that catalyzes glycan chain elongation from lipid-linked precursors. This Pseudomonas fluorescens (strain ATCC BAA-477 / NRRL B-23932 / Pf-5) protein is Biosynthetic peptidoglycan transglycosylase.